A 208-amino-acid polypeptide reads, in one-letter code: Virion protein US10 homolog (208 aa).

Positions 17-61 (ARGAKLSPGQHPRPSHAVRGRTAPGTRSSRRRTCEDGTSGPRDPR) are disordered. The segment at 167-179 (CAFWCCLAHAATC) is a zinc-finger region.

This sequence belongs to the herpesviridae US10 family. Post-translationally, phosphorylated.

Its subcellular location is the virion tegument. The protein resides in the host nucleus matrix. The protein is Virion protein US10 homolog of Homo sapiens (Human).